We begin with the raw amino-acid sequence, 176 residues long: Disulfide bond formation protein B (176 aa).

Residues 1-14 lie on the Cytoplasmic side of the membrane; sequence MLRFLNQCSRGRGA. A helical transmembrane segment spans residues 15–31; it reads WLLMAFTALALEMVALW. Over 32 to 49 the chain is Periplasmic; the sequence is FQHVMLLKPCVLCIYERC. Cysteines 41 and 44 form a disulfide. A helical transmembrane segment spans residues 50–65; that stretch reads ALFGVMGAGLVGAIAP. Topologically, residues 66 to 71 are cytoplasmic; that stretch reads KTPLRY. The chain crosses the membrane as a helical span at residues 72 to 89; the sequence is VAMVIWIYSAWRGLQLAY. Over 90–144 the chain is Periplasmic; it reads EHTMIQLHPSPFMTCDFMARFPDWLPLGKWLPQVFVASGDCAERQWSFLTLEMPQ. A disulfide bridge links Cys104 with Cys130. A helical transmembrane segment spans residues 145 to 163; that stretch reads WLLGIFAAYLVVAIAVVIA. The Cytoplasmic portion of the chain corresponds to 164–176; it reads QAFKPKKRDLFGR.

Belongs to the DsbB family.

It localises to the cell inner membrane. Functionally, required for disulfide bond formation in some periplasmic proteins. Acts by oxidizing the DsbA protein. The polypeptide is Disulfide bond formation protein B (Salmonella paratyphi A (strain ATCC 9150 / SARB42)).